A 612-amino-acid polypeptide reads, in one-letter code: Dihydroxy-acid dehydratase (612 aa).

Residue Asp-81 participates in Mg(2+) binding. A [2Fe-2S] cluster-binding site is contributed by Cys-122. Positions 123 and 124 each coordinate Mg(2+). At Lys-124 the chain carries N6-carboxylysine. Cys-193 is a binding site for [2Fe-2S] cluster. Mg(2+) is bound at residue Glu-489. Ser-515 acts as the Proton acceptor in catalysis.

The protein belongs to the IlvD/Edd family. As to quaternary structure, homodimer. It depends on [2Fe-2S] cluster as a cofactor. Requires Mg(2+) as cofactor.

The enzyme catalyses (2R)-2,3-dihydroxy-3-methylbutanoate = 3-methyl-2-oxobutanoate + H2O. The catalysed reaction is (2R,3R)-2,3-dihydroxy-3-methylpentanoate = (S)-3-methyl-2-oxopentanoate + H2O. It participates in amino-acid biosynthesis; L-isoleucine biosynthesis; L-isoleucine from 2-oxobutanoate: step 3/4. Its pathway is amino-acid biosynthesis; L-valine biosynthesis; L-valine from pyruvate: step 3/4. Functionally, functions in the biosynthesis of branched-chain amino acids. Catalyzes the dehydration of (2R,3R)-2,3-dihydroxy-3-methylpentanoate (2,3-dihydroxy-3-methylvalerate) into 2-oxo-3-methylpentanoate (2-oxo-3-methylvalerate) and of (2R)-2,3-dihydroxy-3-methylbutanoate (2,3-dihydroxyisovalerate) into 2-oxo-3-methylbutanoate (2-oxoisovalerate), the penultimate precursor to L-isoleucine and L-valine, respectively. This chain is Dihydroxy-acid dehydratase, found in Pseudomonas paraeruginosa (strain DSM 24068 / PA7) (Pseudomonas aeruginosa (strain PA7)).